Reading from the N-terminus, the 405-residue chain is MGSIAESSPLMSRENVEGIRKAQRAEGTATVMAIGTAHPPHIFPQDTYADFYFRATNSEHKVELKKKFDRICKKTMIGKRYFNYDEEFLKKYPNITSFDEPSLNDRQDICVPGVPALGKEAALKAIEEWGQPLSKITHLVFCTSCGVDMPSADFQLAKLLGLNTNVNKYCVYMQGCYAGGTVLRYAKDLAENNRGSRVLVVCAELTIIGLRGPNESHLDNAIGNSLFGDGAAALIVGADPIVGIEKPIFEIVCAKQTVIPDSEDVIHLHLREAGLMFYMSKDSPETISNNVEGCLVDIFKSVGMTPPADWNSLFWIPHPGGRAILDEVEARLKLRPEKFRATRHVLWEYGNMVSACVLYILDEMRNKSAADGLGTYGEGLEWGVLLGFGPGMTVETILLHSLPPV.

Polar residues predominate over residues methionine 1–leucine 10. A disordered region spans residues methionine 1–alanine 22. Cysteine 176 is a catalytic residue. Residues serine 283 and glycine 320–alanine 323 contribute to the CoA site.

Belongs to the thiolase-like superfamily. Chalcone/stilbene synthases family. In terms of assembly, homodimer.

The protein operates within secondary metabolite biosynthesis; flavonoid biosynthesis. Its function is as follows. Catalyzes the iterative condensations of 8 molecules of malonyl-CoA to produce aromatic octaketides, SEK4 and SEK4b, the products of the minimal polyketide synthase for the benzoisochromanequinone actinorhodin. May be involved in the biosynthesis of the octaketide barbaloin. This chain is Octaketide synthase 3 (PKS5), found in Aloe arborescens (Kidachi aloe).